Consider the following 255-residue polypeptide: Hydroxyacylglutathione hydrolase (255 aa).

Residues His-56, His-58, Asp-60, His-61, His-114, Asp-133, and His-171 each contribute to the Zn(2+) site.

This sequence belongs to the metallo-beta-lactamase superfamily. Glyoxalase II family. As to quaternary structure, monomer. Zn(2+) is required as a cofactor.

The catalysed reaction is an S-(2-hydroxyacyl)glutathione + H2O = a 2-hydroxy carboxylate + glutathione + H(+). It functions in the pathway secondary metabolite metabolism; methylglyoxal degradation; (R)-lactate from methylglyoxal: step 2/2. In terms of biological role, thiolesterase that catalyzes the hydrolysis of S-D-lactoyl-glutathione to form glutathione and D-lactic acid. The chain is Hydroxyacylglutathione hydrolase from Bradyrhizobium sp. (strain ORS 278).